The following is a 140-amino-acid chain: uncharacterized protein (140 aa).

The stretch at 27 to 65 forms a coiled coil; that stretch reads LLGEVSELELQKICFNRSLRNEINQLEEQNDISFVRVER.

This is an uncharacterized protein from Pasteurella multocida (strain Pm70).